The chain runs to 115 residues: UPF0102 protein NGO_1987 (115 aa).

This sequence belongs to the UPF0102 family.

The sequence is that of UPF0102 protein NGO_1987 from Neisseria gonorrhoeae (strain ATCC 700825 / FA 1090).